Consider the following 118-residue polypeptide: Large ribosomal subunit protein bL20 (118 aa).

The protein belongs to the bacterial ribosomal protein bL20 family.

Binds directly to 23S ribosomal RNA and is necessary for the in vitro assembly process of the 50S ribosomal subunit. It is not involved in the protein synthesizing functions of that subunit. The polypeptide is Large ribosomal subunit protein bL20 (Yersinia enterocolitica serotype O:8 / biotype 1B (strain NCTC 13174 / 8081)).